The sequence spans 166 residues: Photosystem I assembly protein Ycf3 (166 aa).

TPR repeat units lie at residues 35 to 68 (AFTY…EIDP), 72 to 105 (SYIL…NPSL), and 120 to 153 (GEQA…APTN).

The protein belongs to the Ycf3 family.

It is found in the plastid. The protein localises to the chloroplast thylakoid membrane. Functionally, essential for the assembly of the photosystem I (PSI) complex. May act as a chaperone-like factor to guide the assembly of the PSI subunits. The protein is Photosystem I assembly protein Ycf3 of Oltmannsiellopsis viridis (Marine flagellate).